A 92-amino-acid polypeptide reads, in one-letter code: Larval cuticle protein 9 (92 aa).

The first 16 residues, methionine 1–alanine 16, serve as a signal peptide directing secretion. Positions leucine 31 to alanine 92 constitute a Chitin-binding type R&amp;R domain.

In terms of biological role, component of the cuticle of the larva. The sequence is that of Larval cuticle protein 9 (Lcp9) from Drosophila melanogaster (Fruit fly).